Consider the following 255-residue polypeptide: Proteasome subunit alpha (255 aa).

Residues proline 190–threonine 201 are compositionally biased toward polar residues. Residues proline 190–asparagine 255 are disordered. A compositionally biased stretch (basic and acidic residues) spans glutamate 202–glycine 217.

Belongs to the peptidase T1A family. As to quaternary structure, the 20S proteasome core is composed of 14 alpha and 14 beta subunits that assemble into four stacked heptameric rings, resulting in a barrel-shaped structure. The two inner rings, each composed of seven catalytic beta subunits, are sandwiched by two outer rings, each composed of seven alpha subunits. The catalytic chamber with the active sites is on the inside of the barrel. Has a gated structure, the ends of the cylinder being occluded by the N-termini of the alpha-subunits. Is capped by the proteasome-associated ATPase, ARC.

The protein localises to the cytoplasm. It functions in the pathway protein degradation; proteasomal Pup-dependent pathway. With respect to regulation, the formation of the proteasomal ATPase ARC-20S proteasome complex, likely via the docking of the C-termini of ARC into the intersubunit pockets in the alpha-rings, may trigger opening of the gate for substrate entry. Interconversion between the open-gate and close-gate conformations leads to a dynamic regulation of the 20S proteasome proteolysis activity. Functionally, component of the proteasome core, a large protease complex with broad specificity involved in protein degradation. This chain is Proteasome subunit alpha, found in Saccharomonospora viridis (strain ATCC 15386 / DSM 43017 / JCM 3036 / CCUG 5913 / NBRC 12207 / NCIMB 9602 / P101) (Thermoactinomyces viridis).